Reading from the N-terminus, the 270-residue chain is MSGKANTSKKKSQRVKRNVKQRADKEDEELDSPENKVGNRAKRNRSHAGHLSSKEQTKCVHLKRVKISSNKRTAWQPLPKNTEEYLQSMMDSAILGILNKNIKRKEQIQYHLDQLKKRFLQQCATLKVPPGKLNYLRDMSKLLKVEREQERANEESLASLQEEIDKIVETTESMTENIESLKTKIEILTNEVEKEEEEMKEVFHIDSNKVLALPELSQKSLKAPILQKEILTLIPNQNALLKDLDVLQNSAPGKNMAAFIQEAYMKLNGS.

The segment at 1-59 is disordered; that stretch reads MSGKANTSKKKSQRVKRNVKQRADKEDEELDSPENKVGNRAKRNRSHAGHLSSKEQTKC. Composition is skewed to basic residues over residues 7-20 and 39-48; these read TSKK…RNVK and NRAKRNRSHA. Ser52 is subject to Phosphoserine. Residues 143–205 adopt a coiled-coil conformation; sequence LKVEREQERA…EEEMKEVFHI (63 aa).

This sequence belongs to the CENP-Q/OKP1 family. As to quaternary structure, component of the CENPA-CAD complex, composed of CENPI, CENPK, CENPL, CENPO, CENPP, CENPQ, CENPR and CENPS. The CENPA-CAD complex interacts with the CENPA-NAC complex, at least composed of CENPA, CENPC, CENPH, CENPM, CENPN, CENPT and CENPU. In terms of processing, phosphorylation at Ser-52 is essential for CENPE recruitment to kinetochores and orderly chromosome congression.

Its subcellular location is the nucleus. The protein resides in the chromosome. It is found in the centromere. Functionally, component of the CENPA-CAD (nucleosome distal) complex, a complex recruited to centromeres which is involved in assembly of kinetochore proteins, mitotic progression and chromosome segregation. May be involved in incorporation of newly synthesized CENPA into centromeres via its interaction with the CENPA-NAC complex. Plays an important role in chromosome congression and in the recruitment of CENP-O complex (which comprises CENPO, CENPP, CENPQ and CENPU), CENPE and PLK1 to the kinetochores. The sequence is that of Centromere protein Q (Cenpq) from Rattus norvegicus (Rat).